The sequence spans 934 residues: Protein translocase subunit SecA (934 aa).

ATP is bound by residues Gln90, 108 to 112, and Asp509; that span reads GEGKT. Positions 535–565 are disordered; it reads PEEDHTPPVPLQRSAPGGFSDAAAPSLPRSG.

It belongs to the SecA family. Monomer and homodimer. Part of the essential Sec protein translocation apparatus which comprises SecA, SecYEG and auxiliary proteins SecDF. Other proteins may also be involved.

Its subcellular location is the cell inner membrane. The protein resides in the cellular thylakoid membrane. The protein localises to the cytoplasm. It catalyses the reaction ATP + H2O + cellular proteinSide 1 = ADP + phosphate + cellular proteinSide 2.. In terms of biological role, part of the Sec protein translocase complex. Interacts with the SecYEG preprotein conducting channel. Has a central role in coupling the hydrolysis of ATP to the transfer of proteins into and across the cell membrane, serving as an ATP-driven molecular motor driving the stepwise translocation of polypeptide chains across the membrane. Its function is as follows. Probably participates in protein translocation into and across both the cytoplasmic and thylakoid membranes in cyanobacterial cells. This chain is Protein translocase subunit SecA, found in Synechococcus sp. (strain CC9605).